The sequence spans 116 residues: Large ribosomal subunit protein bL19 (116 aa).

Belongs to the bacterial ribosomal protein bL19 family.

In terms of biological role, this protein is located at the 30S-50S ribosomal subunit interface and may play a role in the structure and function of the aminoacyl-tRNA binding site. The chain is Large ribosomal subunit protein bL19 from Pseudomonas putida (strain ATCC 700007 / DSM 6899 / JCM 31910 / BCRC 17059 / LMG 24140 / F1).